The chain runs to 331 residues: WW domain-containing protein C2F3.14c (331 aa).

The interval Met-1–Ile-184 is disordered. Residues Ala-9 to Val-22 show a composition bias toward polar residues. Over residues Asn-23–Asn-41 the composition is skewed to low complexity. The span at Ser-57–Ala-89 shows a compositional bias: polar residues. Over residues Arg-105 to Pro-145 the composition is skewed to pro residues. Over residues Ser-158–Ile-184 the composition is skewed to polar residues. Residues Ser-187 to Glu-220 form the WW domain. The tract at residues Tyr-290–Lys-309 is disordered. The span at Arg-292 to Lys-309 shows a compositional bias: basic and acidic residues.

The protein resides in the nucleus. The sequence is that of WW domain-containing protein C2F3.14c from Schizosaccharomyces pombe (strain 972 / ATCC 24843) (Fission yeast).